A 233-amino-acid polypeptide reads, in one-letter code: Phycoerythrobilin synthase (233 aa).

The protein belongs to the HY2 family.

It catalyses the reaction (3Z)-phycoerythrobilin + 2 oxidized 2[4Fe-4S]-[ferredoxin] = biliverdin IXalpha + 2 reduced 2[4Fe-4S]-[ferredoxin] + 4 H(+). Functionally, plays a role in phycoerythrobilin biosynthesis, the red pigment chromophore photosynthetically active biliproteins of the host cyanobacteria. Uses a four-electron reduction to carry out the reactions catalyzed by two enzymes (EC 1.3.7.2 and EC 1.3.7.3) in host. This chain is Phycoerythrobilin synthase (pebS), found in Prochlorococcus.